We begin with the raw amino-acid sequence, 408 residues long: Epsin-3 (408 aa).

N-acetylserine is present on S2. Positions 24 to 157 (NVVFNYTEME…SDDNKIRAER (134 aa)) constitute an ENTH domain. The interval 162–182 (ETAKKYKGVAGGSASADGSLN) is disordered. Phosphoserine is present on residues S196, S198, S203, S212, and S223. 2 disordered regions span residues 199–322 (ADFD…ITPA) and 338–408 (TAKA…LLSF). Acidic residues predominate over residues 201–210 (FDSDNEDNED). The span at 211–231 (GSFSQNGYNDNASRATSTPGQ) shows a compositional bias: polar residues. Basic and acidic residues predominate over residues 249–263 (KPSKELIQEDEKKAD). Residues 264–273 (EEEDDDDEFS) show a composition bias toward acidic residues. Over residues 279–317 (VPVTNPANSFNLLNTSPIEGMPATTSSMPFYNSSTTDQG) the composition is skewed to polar residues. The span at 338-361 (TAKASAEAPSAPKASQAKAAASNP) shows a compositional bias: low complexity. Polar residues-rich tracts occupy residues 362-371 (VSNSTTALST) and 388-398 (QQEQNTNNNHT). Basic and acidic residues predominate over residues 399–408 (SSKEIDLLSF).

Interacts with the clathrin adapter GGA2, and VPS27.

It localises to the cytoplasm. It is found in the golgi apparatus. Its subcellular location is the trans-Golgi network membrane. The protein resides in the cytoplasmic vesicle. The protein localises to the clathrin-coated vesicle membrane. Involved in the recruitment of clathrin to the Golgi network and endosomes to form clathrin coated vesicles. Plays a role in the trafficking of clathrin between the Golgi network and endosomes. Binds to membranes enriched in phosphatidylinositol-3,5-bisphosphate (PtdIns(3,5)P2) and, in association with VPS27, is involved in protein sorting at the multivesicular body (MVB). The polypeptide is Epsin-3 (ENT3) (Saccharomyces cerevisiae (strain ATCC 204508 / S288c) (Baker's yeast)).